The sequence spans 319 residues: Myoblast determination protein 1 (319 aa).

M1 participates in a covalent cross-link: Peptide (Met-Gly) (interchain with G-Cter in ubiquitin). K104 carries the post-translational modification N6-methyllysine; by EHMT2. The region spanning 109–160 is the bHLH domain; that stretch reads DRRKAATMRERRRLSKVNEAFETLKRCTSSNPNQRLPKVEILRNAIRYIEGL. Disordered regions lie at residues 174-222 and 267-319; these read AAAA…GARR and PALL…YQVL. The span at 197-207 shows a compositional bias: polar residues; that stretch reads SDASSPRSNCS. A compositionally biased stretch (low complexity) spans 267 to 276; it reads PALLLADAPP.

Efficient DNA binding requires dimerization with another bHLH protein. Seems to form active heterodimers with ITF-2. Interacts with SUV39H1. Interacts with DDX5. Interacts with CHD2. Interacts with TSC22D3. Interacts with SETD3. Interacts with P-TEFB complex; promotes the transcriptional activity of MYOD1 through its CDK9-mediated phosphorylation. Interacts with CSRP3. Interacts with NUPR1. In terms of processing, phosphorylated by CDK9. This phosphorylation promotes its function in muscle differentiation. Acetylated by a complex containing EP300 and PCAF. The acetylation is essential to activate target genes. Conversely, its deacetylation by SIRT1 inhibits its function. Post-translationally, ubiquitinated on the N-terminus; which is required for proteasomal degradation. In terms of processing, methylation at Lys-104 by EHMT2/G9a inhibits myogenic activity.

Its subcellular location is the nucleus. Functionally, acts as a transcriptional activator that promotes transcription of muscle-specific target genes and plays a role in muscle differentiation. Together with MYF5 and MYOG, co-occupies muscle-specific gene promoter core region during myogenesis. Induces fibroblasts to differentiate into myoblasts. Interacts with and is inhibited by the twist protein. This interaction probably involves the basic domains of both proteins. The protein is Myoblast determination protein 1 (MYOD1) of Ovis aries (Sheep).